Here is a 133-residue protein sequence, read N- to C-terminus: Lymphocyte antigen 6 complex locus protein G6d (133 aa).

Positions 1–19 are cleaved as a signal peptide; that stretch reads MKPQFVGILLSSLLGAALG. In terms of domain architecture, UPAR/Ly6 spans 22-116; sequence MRCYNCGGSP…ASHVAPAGIL (95 aa). A disulfide bridge connects residues C27 and C35. T40 and T41 each carry an O-linked (GalNAc...) threonine glycan. 2 cysteine pairs are disulfide-bonded: C42/C71 and C77/C96. A lipid anchor (GPI-anchor amidated serine) is attached at S104. Residues 105–133 constitute a propeptide, removed in mature form; the sequence is AVASHVAPAGILAAAATALTCLLPGLWSG.

As to quaternary structure, homodimer. In terms of processing, O-glycosylated. As to expression, expressed in the adult lung, and in fetal liver, lung, kidney, brain and spleen.

The protein localises to the cell membrane. It is found in the cell projection. The protein resides in the filopodium. This chain is Lymphocyte antigen 6 complex locus protein G6d (LY6G6D), found in Homo sapiens (Human).